The sequence spans 542 residues: CTP synthase (542 aa).

The amidoligase domain stretch occupies residues 1–265 (MARYVFITGG…DSEVLSAFGI (265 aa)). A CTP-binding site is contributed by Ser-13. Residue Ser-13 participates in UTP binding. 14 to 19 (SLGKGI) is an ATP binding site. Tyr-54 serves as a coordination point for L-glutamine. Asp-71 lines the ATP pocket. Residues Asp-71 and Glu-139 each contribute to the Mg(2+) site. CTP is bound by residues 146–148 (DIE), 186–191 (KTKPTQ), and Lys-222. UTP is bound by residues 186–191 (KTKPTQ) and Lys-222. A Glutamine amidotransferase type-1 domain is found at 291 to 541 (TIAVVGKYTG…IEAAIEQSRL (251 aa)). Residue Gly-353 participates in L-glutamine binding. Cys-380 serves as the catalytic Nucleophile; for glutamine hydrolysis. L-glutamine is bound by residues 381–384 (FGMQ), Glu-404, and Arg-469. Residues His-514 and Glu-516 contribute to the active site.

This sequence belongs to the CTP synthase family. Homotetramer.

It carries out the reaction UTP + L-glutamine + ATP + H2O = CTP + L-glutamate + ADP + phosphate + 2 H(+). The catalysed reaction is L-glutamine + H2O = L-glutamate + NH4(+). The enzyme catalyses UTP + NH4(+) + ATP = CTP + ADP + phosphate + 2 H(+). The protein operates within pyrimidine metabolism; CTP biosynthesis via de novo pathway; CTP from UDP: step 2/2. Allosterically activated by GTP, when glutamine is the substrate; GTP has no effect on the reaction when ammonia is the substrate. The allosteric effector GTP functions by stabilizing the protein conformation that binds the tetrahedral intermediate(s) formed during glutamine hydrolysis. Inhibited by the product CTP, via allosteric rather than competitive inhibition. Functionally, catalyzes the ATP-dependent amination of UTP to CTP with either L-glutamine or ammonia as the source of nitrogen. Regulates intracellular CTP levels through interactions with the four ribonucleotide triphosphates. The sequence is that of CTP synthase from Brucella canis (strain ATCC 23365 / NCTC 10854 / RM-666).